Reading from the N-terminus, the 313-residue chain is Minor outer capsid protein P9 (313 aa).

The protein belongs to the phytoreovirus minor outer capsid protein P9 family.

The protein resides in the virion. The protein localises to the host cytoplasm. In terms of biological role, minor outer capsid protein. The polypeptide is Minor outer capsid protein P9 (Catharanthus roseus (Madagascar periwinkle)).